A 99-amino-acid polypeptide reads, in one-letter code: UPF0320 protein YER188C-A (99 aa).

This sequence belongs to the UPF0320 family.

The chain is UPF0320 protein YER188C-A from Saccharomyces cerevisiae (strain ATCC 204508 / S288c) (Baker's yeast).